A 119-amino-acid chain; its full sequence is Large ribosomal subunit protein uL22c (119 aa).

It belongs to the universal ribosomal protein uL22 family. In terms of assembly, part of the 50S ribosomal subunit.

It is found in the plastid. The protein localises to the chloroplast. This protein binds specifically to 23S rRNA. Functionally, the globular domain of the protein is located near the polypeptide exit tunnel on the outside of the subunit, while an extended beta-hairpin is found that lines the wall of the exit tunnel in the center of the 70S ribosome. In Anthoceros angustus (Hornwort), this protein is Large ribosomal subunit protein uL22c (rpl22).